Reading from the N-terminus, the 37-residue chain is Non-specific lipid-transfer protein P4 (37 aa).

It belongs to the plant LTP family.

The protein localises to the secreted. Its function is as follows. Plant non-specific lipid-transfer proteins transfer phospholipids as well as galactolipids across membranes. May play a role in wax or cutin deposition in the cell walls of expanding epidermal cells and certain secretory tissues. The protein is Non-specific lipid-transfer protein P4 of Vitis sp. (Grape).